A 314-amino-acid chain; its full sequence is Hydroxyacyl-coenzyme A dehydrogenase, mitochondrial (314 aa).

A mitochondrion-targeting transit peptide spans 1 to 12 (MAFVTRQFLRSM). Residues 34–39 (GGGLMG) and Asp57 contribute to the NAD(+) site. Ser73 is a CoA binding site. Lys75 carries the N6-acetyllysine modification. Residue Lys80 coordinates CoA. Position 80 is an N6-succinyllysine (Lys80). N6-acetyllysine; alternate occurs at positions 81 and 87. N6-succinyllysine; alternate is present on residues Lys81 and Lys87. Glu122 is an NAD(+) binding site. The residue at position 125 (Lys125) is an N6-acetyllysine. Lys127 provides a ligand contact to NAD(+). Position 127 is an N6-(2-hydroxyisobutyryl)lysine (Lys127). The residue at position 136 (Lys136) is an N6-acetyllysine; alternate. Lys136 carries the N6-succinyllysine; alternate modification. 2 residues coordinate NAD(+): Ser149 and Asn173. Residue Ser149 participates in CoA binding. N6-acetyllysine is present on Lys179. N6-acetyllysine; alternate occurs at positions 185, 192, and 202. Residues Lys185, Lys192, and Lys202 each carry the N6-succinyllysine; alternate modification. Residue Lys206 is modified to N6-succinyllysine. Lys212 and Lys241 each carry N6-acetyllysine; alternate. 2 positions are modified to N6-succinyllysine; alternate: Lys212 and Lys241. Residue Lys305 coordinates NAD(+). Residue Lys312 is modified to N6-acetyllysine; alternate. N6-succinyllysine; alternate is present on Lys312.

This sequence belongs to the 3-hydroxyacyl-CoA dehydrogenase family. In terms of assembly, homodimer. Interacts with GLUD1; this interaction inhibits the activation of glutamate dehydrogenase 1 (GLUD1). In terms of processing, succinylation at Lys-81, adjacent to a coenzyme A binding site. Desuccinylated by SIRT5. Expressed in liver, kidney, brain, and pancreatic islets.

The protein localises to the mitochondrion matrix. It localises to the nucleus. The protein resides in the cytoplasm. It is found in the cytosol. The catalysed reaction is a (3S)-3-hydroxyacyl-CoA + NAD(+) = a 3-oxoacyl-CoA + NADH + H(+). The enzyme catalyses (3S)-3-hydroxybutanoyl-CoA + NAD(+) = acetoacetyl-CoA + NADH + H(+). It catalyses the reaction (3S)-hydroxydecanoyl-CoA + NAD(+) = 3-oxodecanoyl-CoA + NADH + H(+). It carries out the reaction (3S)-hydroxyhexadecanoyl-CoA + NAD(+) = 3-oxohexadecanoyl-CoA + NADH + H(+). Its pathway is lipid metabolism; fatty acid beta-oxidation. Functionally, mitochondrial fatty acid beta-oxidation enzyme that catalyzes the third step of the beta-oxidation cycle for medium and short-chain 3-hydroxy fatty acyl-CoAs (C4 to C10). Plays a role in the control of insulin secretion by inhibiting the activation of glutamate dehydrogenase 1 (GLUD1), an enzyme that has an important role in regulating amino acid-induced insulin secretion. Plays a role in the maintenance of normal spermatogenesis through the reduction of fatty acid accumulation in the testes. Its function is as follows. Inhibits cell proliferation. This Mus musculus (Mouse) protein is Hydroxyacyl-coenzyme A dehydrogenase, mitochondrial (Hadh).